Reading from the N-terminus, the 402-residue chain is Pyridinium-3,5-bisthiocarboxylic acid mononucleotide nickel insertion protein (402 aa).

It belongs to the LarC family.

It catalyses the reaction Ni(II)-pyridinium-3,5-bisthiocarboxylate mononucleotide = pyridinium-3,5-bisthiocarboxylate mononucleotide + Ni(2+). Functionally, involved in the biosynthesis of a nickel-pincer cofactor ((SCS)Ni(II) pincer complex). Binds Ni(2+), and functions in nickel delivery to pyridinium-3,5-bisthiocarboxylic acid mononucleotide (P2TMN), to form the mature cofactor. Is thus probably required for the activation of nickel-pincer cofactor-dependent enzymes. The sequence is that of Pyridinium-3,5-bisthiocarboxylic acid mononucleotide nickel insertion protein from Desulfitobacterium hafniense (strain DSM 10664 / DCB-2).